Consider the following 120-residue polypeptide: cAMP-responsive element-binding protein-like 2 (120 aa).

A disordered region spans residues 1-24 (MDDSKVVGGKVKKPGKRGRKPAKI). A compositionally biased stretch (basic residues) spans 10 to 21 (KVKKPGKRGRKP). A bZIP domain is found at 23 to 86 (KIDLKAKLER…MAMDQGKIPS (64 aa)). A basic motif region spans residues 29-60 (KLERSRQSARECRARKKLRYQYLEELVSSRER). A leucine-zipper region spans residues 62 to 69 (ICALREEL). The interval 93-120 (TGEEQNKSQQNSSRHTKAGKTDANSNSW) is disordered.

This sequence belongs to the bZIP family. ATF subfamily. Interacts with CREB1; regulates CREB1 phosphorylation, stability and transcriptional activity. In terms of processing, phosphorylated by AMPK.

It localises to the nucleus. Its function is as follows. Probable regulator of CREB1 transcriptional activity which is involved in adipose cells differentiation. May also play a regulatory role in the cell cycle. Identification in a chromosomal region frequently deleted in various cancers suggests that it might act as a tumor suppressor. This is cAMP-responsive element-binding protein-like 2 (CREBL2) from Homo sapiens (Human).